We begin with the raw amino-acid sequence, 237 residues long: LexA repressor (237 aa).

Residues F26 to T46 constitute a DNA-binding region (H-T-H motif). Catalysis depends on for autocatalytic cleavage activity residues S158 and K196.

The protein belongs to the peptidase S24 family. As to quaternary structure, homodimer.

The enzyme catalyses Hydrolysis of Ala-|-Gly bond in repressor LexA.. Its function is as follows. Represses a number of genes involved in the response to DNA damage (SOS response), including recA and lexA. In the presence of single-stranded DNA, RecA interacts with LexA causing an autocatalytic cleavage which disrupts the DNA-binding part of LexA, leading to derepression of the SOS regulon and eventually DNA repair. This Xanthobacter autotrophicus (strain ATCC BAA-1158 / Py2) protein is LexA repressor.